The chain runs to 803 residues: Translation initiation factor IF-2 (803 aa).

The segment covering 65–75 has biased composition (basic and acidic residues); the sequence is PDKVEEKKEHT. The segment at 65–186 is disordered; that stretch reads PDKVEEKKEH…PKSRKSKTLK (122 aa). Over residues 175–185 the composition is skewed to basic residues; that stretch reads NKPKSRKSKTL. In terms of domain architecture, tr-type G spans 300–468; that stretch reads IRPPVVTIMG…ILLTADAALE (169 aa). The interval 309 to 316 is G1; it reads GHVDHGKT. 309-316 contributes to the GTP binding site; the sequence is GHVDHGKT. Residues 334–338 form a G2 region; it reads GITQH. The interval 355–358 is G3; sequence DTPG. GTP is bound by residues 355-359 and 409-412; these read DTPGH and NKID. Residues 409 to 412 form a G4 region; it reads NKID. The G5 stretch occupies residues 445 to 447; that stretch reads SAK.

It belongs to the TRAFAC class translation factor GTPase superfamily. Classic translation factor GTPase family. IF-2 subfamily.

The protein localises to the cytoplasm. One of the essential components for the initiation of protein synthesis. Protects formylmethionyl-tRNA from spontaneous hydrolysis and promotes its binding to the 30S ribosomal subunits. Also involved in the hydrolysis of GTP during the formation of the 70S ribosomal complex. This Tropheryma whipplei (strain Twist) (Whipple's bacillus) protein is Translation initiation factor IF-2.